A 78-amino-acid chain; its full sequence is MTRHLIFAAVLLVCLFVCWNAVGAQDARSAFSSEETAQDQHVMEERIFINPAGNREKNACMENCRSSPNCKNYEFCSK.

A signal peptide spans 1–24; it reads MTRHLIFAAVLLVCLFVCWNAVGA. Positions 25-28 are excised as a propeptide; sequence QDAR.

It belongs to the scoloptoxin-04 family. Post-translationally, contains 2 disulfide bonds. As to expression, expressed by the venom gland.

It localises to the secreted. The chain is U-scoloptoxin(04)-Er1b from Ethmostigmus rubripes (Giant centipede).